The chain runs to 398 residues: ATP-dependent RNA helicase eIF4A (398 aa).

The Q motif motif lies at 25-53 (DSFDSMELKPELLRGVYAYGFERPSAIQQ). A Helicase ATP-binding domain is found at 56–226 (ILPIVKGNDV…TKFMRDPVRI (171 aa)). An ATP-binding site is contributed by 69 to 76 (AQSGTGKT). A DEAD box motif is present at residues 174 to 177 (DEAD). Residues 237–398 (GIKQFYIAVE…EMPMNVADLI (162 aa)) enclose the Helicase C-terminal domain.

It belongs to the DEAD box helicase family. eIF4A subfamily. Component of the eIF4F complex, which composition varies with external and internal environmental conditions. It is composed of at least eIF4A, eIF4E and eIF4G.

The protein resides in the cytoplasm. The catalysed reaction is ATP + H2O = ADP + phosphate + H(+). Its function is as follows. ATP-dependent RNA helicase which is a subunit of the eIF4F complex involved in cap recognition and is required for mRNA binding to ribosome. In the current model of translation initiation, eIF4A unwinds RNA secondary structures in the 5'-UTR of mRNAs which is necessary to allow efficient binding of the small ribosomal subunit, and subsequent scanning for the initiator codon. This Emericella nidulans (strain FGSC A4 / ATCC 38163 / CBS 112.46 / NRRL 194 / M139) (Aspergillus nidulans) protein is ATP-dependent RNA helicase eIF4A (tif1).